We begin with the raw amino-acid sequence, 362 residues long: Fructose-bisphosphate aldolase (362 aa).

Ser-65 is a binding site for D-glyceraldehyde 3-phosphate. The Proton donor role is filled by Asp-112. Residues His-113, Asp-147, Glu-177, and His-229 each contribute to the Zn(2+) site. Gly-230 contacts dihydroxyacetone phosphate. His-268 is a Zn(2+) binding site. Dihydroxyacetone phosphate contacts are provided by residues 269–271 (GGS) and 290–293 (NVDT).

It belongs to the class II fructose-bisphosphate aldolase family. As to quaternary structure, homodimer. Zn(2+) is required as a cofactor.

It carries out the reaction beta-D-fructose 1,6-bisphosphate = D-glyceraldehyde 3-phosphate + dihydroxyacetone phosphate. It functions in the pathway carbohydrate degradation; glycolysis; D-glyceraldehyde 3-phosphate and glycerone phosphate from D-glucose: step 4/4. Its function is as follows. Catalyzes the aldol condensation of dihydroxyacetone phosphate (DHAP or glycerone-phosphate) with glyceraldehyde 3-phosphate (G3P) to form fructose 1,6-bisphosphate (FBP) in gluconeogenesis and the reverse reaction in glycolysis. This is Fructose-bisphosphate aldolase (fbaA) from Aspergillus oryzae (strain ATCC 42149 / RIB 40) (Yellow koji mold).